Here is a 310-residue protein sequence, read N- to C-terminus: p-hydroxybenzoic acid efflux pump subunit AaeA (310 aa).

A helical membrane pass occupies residues 12–32 (AITVVLVILAFIAIFNAWVYY).

The protein belongs to the membrane fusion protein (MFP) (TC 8.A.1) family.

The protein resides in the cell inner membrane. In terms of biological role, forms an efflux pump with AaeB. The chain is p-hydroxybenzoic acid efflux pump subunit AaeA from Escherichia coli O127:H6 (strain E2348/69 / EPEC).